The chain runs to 580 residues: Amino-acid acetyltransferase, mitochondrial (580 aa).

Residues 403 to 560 enclose the N-acetyltransferase domain; the sequence is LTMQNLFDDK…NPRHKNGVVN (158 aa).

The protein belongs to the acetyltransferase family.

It is found in the mitochondrion. It catalyses the reaction L-glutamate + acetyl-CoA = N-acetyl-L-glutamate + CoA + H(+). It functions in the pathway amino-acid biosynthesis; L-arginine biosynthesis; N(2)-acetyl-L-ornithine from L-glutamate: step 1/4. In terms of biological role, N-acetylglutamate synthase involved in arginine biosynthesis. This Candida dubliniensis (strain CD36 / ATCC MYA-646 / CBS 7987 / NCPF 3949 / NRRL Y-17841) (Yeast) protein is Amino-acid acetyltransferase, mitochondrial (ARG2).